Reading from the N-terminus, the 552-residue chain is Dihydroxy-acid dehydratase (552 aa).

Aspartate 78 serves as a coordination point for Mg(2+). Cysteine 119 provides a ligand contact to [2Fe-2S] cluster. Residues aspartate 120 and lysine 121 each contribute to the Mg(2+) site. Residue lysine 121 is modified to N6-carboxylysine. A [2Fe-2S] cluster-binding site is contributed by cysteine 190. Glutamate 441 provides a ligand contact to Mg(2+). The active-site Proton acceptor is the serine 467.

This sequence belongs to the IlvD/Edd family. As to quaternary structure, homodimer. [2Fe-2S] cluster serves as cofactor. Mg(2+) is required as a cofactor.

The catalysed reaction is (2R)-2,3-dihydroxy-3-methylbutanoate = 3-methyl-2-oxobutanoate + H2O. It catalyses the reaction (2R,3R)-2,3-dihydroxy-3-methylpentanoate = (S)-3-methyl-2-oxopentanoate + H2O. The protein operates within amino-acid biosynthesis; L-isoleucine biosynthesis; L-isoleucine from 2-oxobutanoate: step 3/4. Its pathway is amino-acid biosynthesis; L-valine biosynthesis; L-valine from pyruvate: step 3/4. Functions in the biosynthesis of branched-chain amino acids. Catalyzes the dehydration of (2R,3R)-2,3-dihydroxy-3-methylpentanoate (2,3-dihydroxy-3-methylvalerate) into 2-oxo-3-methylpentanoate (2-oxo-3-methylvalerate) and of (2R)-2,3-dihydroxy-3-methylbutanoate (2,3-dihydroxyisovalerate) into 2-oxo-3-methylbutanoate (2-oxoisovalerate), the penultimate precursor to L-isoleucine and L-valine, respectively. The chain is Dihydroxy-acid dehydratase from Ignicoccus hospitalis (strain KIN4/I / DSM 18386 / JCM 14125).